We begin with the raw amino-acid sequence, 114 residues long: Flagellar hook-basal body complex protein FliE (114 aa).

It belongs to the FliE family.

Its subcellular location is the bacterial flagellum basal body. In Desulfitobacterium hafniense (strain Y51), this protein is Flagellar hook-basal body complex protein FliE.